The chain runs to 242 residues: Transcription factor TCP17 (242 aa).

The TCP domain occupies 33–91 (GKDRHSKVCTVRGLRDRRIRLSVMTAIQVYDLQERLGLSQPSKVIDWLLEVAKNDVDLL).

Interacts with SPL. Expressed in cotyledons, particularly in the vascular region, in leaves, roots, stems, buds, flowers and siliques.

It is found in the nucleus. Functionally, plays a pivotal role in the control of morphogenesis of shoot organs by negatively regulating the expression of boundary-specific genes such as CUC genes, probably through the induction of miRNA (e.g. miR164). Participates in ovule development. The chain is Transcription factor TCP17 (TCP17) from Arabidopsis thaliana (Mouse-ear cress).